We begin with the raw amino-acid sequence, 139 residues long: Transthyretin-like protein 5 (139 aa).

An N-terminal signal peptide occupies residues 1 to 15; it reads MKLIILLCLVASSYA.

The protein belongs to the nematode transthyretin-like family.

Its subcellular location is the secreted. This chain is Transthyretin-like protein 5 (ttr-5), found in Caenorhabditis elegans.